The chain runs to 866 residues: Autophagy-related protein 9 (866 aa).

The Cytoplasmic segment spans residues 1-94; that stretch reads MMSSGHKGPN…KGLWCIIVKW (94 aa). A helical membrane pass occupies residues 95-115; sequence AVELLSLGFIICFSGFFLLYV. Residues 116–153 lie on the Lumenal side of the membrane; the sequence is DWNGLQNAKCGMDAVESGTKPCDLVKEAIHPHPLSPFT. The chain crosses the membrane as a helical span at residues 154-174; that stretch reads LTTAIIVGYLALFSVYWLFCF. Residues 175–319 are Cytoplasmic-facing; the sequence is LRFFAQLKDT…VSNPTTLKKR (145 aa). The stretch at 320–340 is an intramembrane region; sequence LFVVGLAMLLLSPFLVIFMLV. Residues 341-404 lie on the Cytoplasmic side of the membrane; sequence YLFLRHAEQF…LKQFPSPIIS (64 aa). The chain crosses the membrane as a helical span at residues 405–425; that stretch reads IIAKFVSFVSGGFAAVLIIIA. Over 426 to 433 the chain is Lumenal; sequence FLEESLLE. The helical transmembrane segment at 434-454 threads the bilayer; it reads GHIFGRNLFWYAAVFGTITAI. Residues 455–507 lie on the Cytoplasmic side of the membrane; the sequence is SRAAISDELLVLDPVGTMSLVVQNTHYMPKRWRGKENKDDVRLELETLFQYTG. An intramembrane segment occupies 508-528; it reads MMLLEEIASIFITPFLLMFVV. At 529–866 the chain is on the cytoplasmic side; sequence PKRVDDILQF…ETSTSSTTLR (338 aa). The disordered stretch occupies residues 744–781; the sequence is QPEGEDSYGSQHPLDGRNQWWGRGNHSQISTAHPATTN. The segment covering 768-781 has biased composition (polar residues); the sequence is NHSQISTAHPATTN.

This sequence belongs to the ATG9 family. In terms of assembly, homotrimer; forms a homotrimer with a central pore that forms a path between the two membrane leaflets. In terms of tissue distribution, expressed in roots, leaves, stems and flowers.

It is found in the preautophagosomal structure membrane. Its function is as follows. Phospholipid scramblase involved in autophagy by mediating autophagosomal membrane expansion. Cycles between the preautophagosomal structure/phagophore assembly site (PAS) and the cytoplasmic vesicle pool and supplies membrane for the growing autophagosome. Lipid scramblase activity plays a key role in preautophagosomal structure/phagophore assembly by distributing the phospholipids that arrive through ATG2 from the cytoplasmic to the luminal leaflet of the bilayer, thereby driving autophagosomal membrane expansion. In addition to autophagy, also plays a role in necrotic cell death. Plays an essential role in plant nutrient recycling. The polypeptide is Autophagy-related protein 9 (Arabidopsis thaliana (Mouse-ear cress)).